The primary structure comprises 515 residues: Maturase K (515 aa).

The protein belongs to the intron maturase 2 family. MatK subfamily.

Its subcellular location is the plastid. It is found in the chloroplast. In terms of biological role, usually encoded in the trnK tRNA gene intron. Probably assists in splicing its own and other chloroplast group II introns. The chain is Maturase K from Pinus sibirica (Siberian pine).